The chain runs to 58 residues: Large ribosomal subunit protein uL30 (58 aa).

Belongs to the universal ribosomal protein uL30 family. Part of the 50S ribosomal subunit.

This Phocaeicola vulgatus (strain ATCC 8482 / DSM 1447 / JCM 5826 / CCUG 4940 / NBRC 14291 / NCTC 11154) (Bacteroides vulgatus) protein is Large ribosomal subunit protein uL30.